Here is a 158-residue protein sequence, read N- to C-terminus: Cysteine proteinase inhibitor 4 (158 aa).

The first 24 residues, 1-24, serve as a signal peptide directing secretion; the sequence is MAARCPVGVASVLLLIVLVTVASA. Residues 26–51 form a disordered region; sequence SGARSGGGGGGGIRELRGGGAGRRVG. Positions 29–49 are enriched in gly residues; sequence RSGGGGGGGIRELRGGGAGRR. The region spanning 51–116 is the Cystatin domain; that stretch reads GGRTEVRDVE…KYYLRVAAAE (66 aa). The short motif at 101–105 is the Secondary area of contact element; that stretch reads QVVSG.

The protein belongs to the cystatin family. Phytocystatin subfamily.

The protein localises to the secreted. Functionally, specific inhibitor of cysteine proteinases. Probably involved in the regulation of endogenous processes and in defense against pests and pathogens. The protein is Cysteine proteinase inhibitor 4 of Oryza sativa subsp. japonica (Rice).